The chain runs to 398 residues: 8-amino-7-oxononanoate synthase (398 aa).

Arginine 26 is a substrate binding site. 113 to 114 (GF) serves as a coordination point for pyridoxal 5'-phosphate. Histidine 138 contacts substrate. Positions 181, 209, and 238 each coordinate pyridoxal 5'-phosphate. An N6-(pyridoxal phosphate)lysine modification is found at lysine 241. Residue threonine 355 coordinates substrate.

Belongs to the class-II pyridoxal-phosphate-dependent aminotransferase family. BioF subfamily. Homodimer. It depends on pyridoxal 5'-phosphate as a cofactor.

The enzyme catalyses 6-carboxyhexanoyl-[ACP] + L-alanine + H(+) = (8S)-8-amino-7-oxononanoate + holo-[ACP] + CO2. The protein operates within cofactor biosynthesis; biotin biosynthesis. Functionally, catalyzes the decarboxylative condensation of pimeloyl-[acyl-carrier protein] and L-alanine to produce 8-amino-7-oxononanoate (AON), [acyl-carrier protein], and carbon dioxide. The polypeptide is 8-amino-7-oxononanoate synthase (Aeromonas salmonicida (strain A449)).